A 374-amino-acid polypeptide reads, in one-letter code: Carbamoyl phosphate synthase small chain (374 aa).

Residues 1–185 (MKAILALEDG…DVSSGYKWSD (185 aa)) form a CPSase region. The L-glutamine site is built by S45, G237, and G239. The Glutamine amidotransferase type-1 domain occupies 189 to 374 (RLVLVDYGVK…RNLVKDATGK (186 aa)). The Nucleophile role is filled by C264. Positions 265, 268, 306, 308, and 309 each coordinate L-glutamine. Active-site residues include H347 and E349.

Belongs to the CarA family. Composed of two chains; the small (or glutamine) chain promotes the hydrolysis of glutamine to ammonia, which is used by the large (or ammonia) chain to synthesize carbamoyl phosphate. Tetramer of heterodimers (alpha,beta)4.

It catalyses the reaction hydrogencarbonate + L-glutamine + 2 ATP + H2O = carbamoyl phosphate + L-glutamate + 2 ADP + phosphate + 2 H(+). The enzyme catalyses L-glutamine + H2O = L-glutamate + NH4(+). Its pathway is amino-acid biosynthesis; L-arginine biosynthesis; carbamoyl phosphate from bicarbonate: step 1/1. The protein operates within pyrimidine metabolism; UMP biosynthesis via de novo pathway; (S)-dihydroorotate from bicarbonate: step 1/3. Small subunit of the glutamine-dependent carbamoyl phosphate synthetase (CPSase). CPSase catalyzes the formation of carbamoyl phosphate from the ammonia moiety of glutamine, carbonate, and phosphate donated by ATP, constituting the first step of 2 biosynthetic pathways, one leading to arginine and/or urea and the other to pyrimidine nucleotides. The small subunit (glutamine amidotransferase) binds and cleaves glutamine to supply the large subunit with the substrate ammonia. The protein is Carbamoyl phosphate synthase small chain of Maridesulfovibrio salexigens (strain ATCC 14822 / DSM 2638 / NCIMB 8403 / VKM B-1763) (Desulfovibrio salexigens).